Here is a 294-residue protein sequence, read N- to C-terminus: ATP phosphoribosyltransferase (294 aa).

Belongs to the ATP phosphoribosyltransferase family. Long subfamily. Requires Mg(2+) as cofactor.

It is found in the cytoplasm. It catalyses the reaction 1-(5-phospho-beta-D-ribosyl)-ATP + diphosphate = 5-phospho-alpha-D-ribose 1-diphosphate + ATP. It participates in amino-acid biosynthesis; L-histidine biosynthesis; L-histidine from 5-phospho-alpha-D-ribose 1-diphosphate: step 1/9. With respect to regulation, feedback inhibited by histidine. In terms of biological role, catalyzes the condensation of ATP and 5-phosphoribose 1-diphosphate to form N'-(5'-phosphoribosyl)-ATP (PR-ATP). Has a crucial role in the pathway because the rate of histidine biosynthesis seems to be controlled primarily by regulation of HisG enzymatic activity. This is ATP phosphoribosyltransferase from Prosthecochloris aestuarii (strain DSM 271 / SK 413).